Consider the following 40-residue polypeptide: Amyloid-beta precursor protein (40 aa).

Belongs to the APP family. As to quaternary structure, binds, via its C-terminus, to the PID domain of several cytoplasmic proteins, including APBB family members, the APBA family, MAPK8IP1, SHC1 and NUMB and DAB1. Binding to DAB1 inhibits its serine phosphorylation. Interacts (via NPXY motif) with DAB2 (via PID domain); the interaction is impaired by tyrosine phosphorylation of the NPXY motif. Also interacts with GPCR-like protein BPP, APPBP1, IB1, KNS2 (via its TPR domains), APPBP2 (via BaSS) and DDB1. In vitro, it binds MAPT via the MT-binding domains. Associates with microtubules in the presence of ATP and in a kinesin-dependent manner. Interacts, through a C-terminal domain, with GNAO1. Interacts with CPEB1, ANKS1B and AGER. Interacts with ITM2B. Interacts with ITM2C. Interacts with IDE. Can form homodimers; dimerization is enhanced in the presence of Cu(2+) ions. Can form homodimers; this is promoted by heparin binding. Interacts with SORL1 (via N-terminal ectodomain); this interaction retains APP in the trans-Golgi network and reduces processing into soluble APP-alpha and amyloid-beta peptides. Interacts with PLD3. Interacts with VDAC1. Interacts with NSG1; could regulate APP processing. Interacts with LRRK2. Interacts (via cytoplasmic domain) with KIF5B. Interacts (via C-terminus) with APBB2/FE65L1 (via C-terminus). Interacts (via intracellular domain) with APBB3. Proteolytically processed under normal cellular conditions. Cleavage either by alpha-secretase, beta-secretase or theta-secretase leads to generation and extracellular release of soluble APP peptides, S-APP-alpha and S-APP-beta, and the retention of corresponding membrane-anchored C-terminal fragments, C80, C83 and C99. Subsequent processing of C80 and C83 by gamma-secretase yields P3 peptides. This is the major secretory pathway and is non-amyloidogenic. Alternatively, presenilin/nicastrin-mediated gamma-secretase processing of C99 releases the amyloid-beta proteins, amyloid-beta protein 40 and amyloid-beta protein 42, major components of amyloid plaques, and the cytotoxic C-terminal fragments, gamma-CTF(50), gamma-CTF(57) and gamma-CTF(59). PSEN1 cleavage is more efficient with C83 than with C99 as substrate (in vitro). Amyloid-beta protein 40 and Amyloid-beta protein 42 are cleaved by ACE. Many other minor amyloid-beta peptides, amyloid-beta 1-X peptides, are found in cerebral spinal fluid (CSF) including the amyloid-beta X-15 peptides, produced from the cleavage by alpha-secretase.

It is found in the cell membrane. Its subcellular location is the membrane. The protein localises to the perikaryon. The protein resides in the cell projection. It localises to the growth cone. It is found in the clathrin-coated pit. Its subcellular location is the early endosome. The protein localises to the cytoplasmic vesicle. In terms of biological role, functions as a cell surface receptor and performs physiological functions on the surface of neurons relevant to neurite growth, neuronal adhesion and axonogenesis. Interaction between APP molecules on neighboring cells promotes synaptogenesis. Involved in cell mobility and transcription regulation through protein-protein interactions. Can promote transcription activation through binding to APBB1-KAT5 and inhibit Notch signaling through interaction with Numb. Couples to apoptosis-inducing pathways such as those mediated by G(o) and JIP. Inhibits G(o)-alpha ATPase activity. Acts as a kinesin I membrane receptor, mediating the axonal transport of beta-secretase and presenilin 1. May be involved in copper homeostasis/oxidative stress through copper ion reduction. In vitro, copper-metallated APP induces neuronal death directly or is potentiated through Cu(2+)-mediated low-density lipoprotein oxidation. Can regulate neurite outgrowth through binding to components of the extracellular matrix such as heparin and collagen I and IV. Induces a AGER-dependent pathway that involves activation of p38 MAPK, resulting in internalization of amyloid-beta peptide and mitochondrial dysfunction in cultured cortical neurons. Provides Cu(2+) ions for GPC1 which are required for release of nitric oxide (NO) and subsequent degradation of the heparan sulfate chains on GPC1. The polypeptide is Amyloid-beta precursor protein (Felis catus (Cat)).